The chain runs to 306 residues: MELKDYYAIMGVKPTDDLKTIKTAYRRLARKYHPDVSKEPDAEARFKEVAEAWEVLSDEQRRAEYDQMWQHRNDPQFSRQFQHGDGQSFNAEDFDDIFSSIFGQHARQSRQRPATRGHDIEIEVAVFLEETLTEHKRTISYNLPVYNAFGMIEQEIPKTLNVKIPAGVGNGQRIRLKGQGTPGENGGPNGDLWLVIHIAPHPLFDIVGQDLEIVVPVSPWEAALGAKVTVPTLKESILLTIPPGSQAGQRLRVKGKGLVSKKQTGDLYAVLKIVMPPKPDENTAALWQQLADAQSSFDPRKDWGKA.

The J domain maps to 5 to 69 (DYYAIMGVKP…QRRAEYDQMW (65 aa)).

Its subcellular location is the cytoplasm. It is found in the nucleoid. Functionally, DNA-binding protein that preferentially recognizes a curved DNA sequence. It is probably a functional analog of DnaJ; displays overlapping activities with DnaJ, but functions under different conditions, probably acting as a molecular chaperone in an adaptive response to environmental stresses other than heat shock. Lacks autonomous chaperone activity; binds native substrates and targets them for recognition by DnaK. Its activity is inhibited by the binding of CbpM. This chain is Curved DNA-binding protein, found in Escherichia coli O17:K52:H18 (strain UMN026 / ExPEC).